Here is a 444-residue protein sequence, read N- to C-terminus: Protein kinase C and casein kinase substrate in neurons protein 1 (444 aa).

2 positions are modified to phosphoserine: serine 2 and serine 79. An F-BAR domain is found at 13–283 (EETTDSFWEV…AIRGADAQDD (271 aa)). A coiled-coil region spans residues 26 to 275 (KRTVKRIDDG…QVYRELEQAI (250 aa)). Position 184 is a phosphothreonine (threonine 184). A disordered region spans residues 313–384 (AAKKEKQPKK…NGGSNPFDED (72 aa)). Basic and acidic residues predominate over residues 314–324 (AKKEKQPKKAE). A compositionally biased stretch (polar residues) spans 336–358 (ESTSQAGDRGSVSSYDRGQTYAT). A phosphoserine mark is found at serine 346, serine 348, serine 349, serine 361, and serine 365. Residues 385–444 (AKGVRVRALYDYDGQEQDELSFKAGDELTKLGEEDEQGWCRGRLDSGQLGLYPANYVEVV) enclose the SH3 domain. The residue at position 394 (tyrosine 394) is a Phosphotyrosine. A phosphoserine mark is found at serine 405 and serine 430.

It belongs to the PACSIN family. As to quaternary structure, homodimer. May form heterooligomers with other PACSINs. Interacts with MAPT. Interacts (via SH3 domain) with SYNJ1 and WASL. Interacts (via SH3 domain) with DNM1; the interaction is reduced by DNM1 phosphorylation. Interacts with DNM2 and DNM3. Interacts with both COBL and DBNL. Identified in a complex composed of COBL, PACSIN1 and WASL. Interacts with EHD1 and EHD3. Interacts with TRPV4. Phosphorylated by casein kinase 2 (CK2) and protein kinase C (PKC).

It localises to the cytoplasm. It is found in the cell projection. Its subcellular location is the synapse. The protein resides in the synaptosome. The protein localises to the ruffle membrane. It localises to the membrane. It is found in the cytoplasmic vesicle membrane. Its subcellular location is the cytosol. The protein resides in the cell membrane. Its function is as follows. Binds to membranes via its F-BAR domain and mediates membrane tubulation. Plays a role in the reorganization of the microtubule cytoskeleton via its interaction with MAPT; this decreases microtubule stability and inhibits MAPT-induced microtubule polymerization. Plays a role in cellular transport processes by recruiting DNM1, DNM2 and DNM3 to membranes. Plays a role in the reorganization of the actin cytoskeleton and in neuron morphogenesis via its interaction with COBL and WASL, and by recruiting COBL to the cell cortex. Plays a role in the regulation of neurite formation, neurite branching and the regulation of neurite length. Required for normal synaptic vesicle endocytosis; this process retrieves previously released neurotransmitters to accommodate multiple cycles of neurotransmission. Required for normal excitatory and inhibitory synaptic transmission. This chain is Protein kinase C and casein kinase substrate in neurons protein 1 (PACSIN1), found in Bos taurus (Bovine).